A 149-amino-acid polypeptide reads, in one-letter code: Transcriptional repressor NrdR (149 aa).

Residues 3-34 (CPFCATDDTKVVDSRLTADGYQIRRRRECPVC) fold into a zinc finger. Residues 49–139 (PHIVKNNGSR…VYLSFDDVEE (91 aa)) enclose the ATP-cone domain.

This sequence belongs to the NrdR family. Requires Zn(2+) as cofactor.

In terms of biological role, negatively regulates transcription of bacterial ribonucleotide reductase nrd genes and operons by binding to NrdR-boxes. The protein is Transcriptional repressor NrdR of Glaesserella parasuis serovar 5 (strain SH0165) (Haemophilus parasuis).